A 1755-amino-acid chain; its full sequence is Transposon Ty1-JR1 Gag-Pol polyprotein (1755 aa).

Positions 1-16 are enriched in low complexity; the sequence is MESQQLSQHSHISHGS. Disordered regions lie at residues 1 to 93, 126 to 173, and 352 to 421; these read MESQ…MMTQ, PQSQ…RPPP, and GSRN…SKST. Composition is skewed to polar residues over residues 48-60 and 127-152; these read TKANSQQTTTPAS and QSQFPQYPSSVGTPLSTPSPESGNTF. Over residues 153–165 the composition is skewed to low complexity; the sequence is TDSSSADSDMTST. An RNA-binding region spans residues 299 to 401; it reads NNGIHINNKV…NSKSKTARAH (103 aa). Over residues 402–418 the composition is skewed to low complexity; it reads NVSTSNNSPSTDNDSIS. Position 416 is a phosphoserine (Ser416). The For protease activity; shared with dimeric partner role is filled by Asp461. An integrase-type zinc finger-like region spans residues 583–640; it reads NVHTSESTRKYPYPFIHRMLAHANAQTIRYSLKNNTITYFNESDVDWSSAIDYQCPDC. Positions 660–835 constitute an Integrase catalytic domain; the sequence is NSYEPFQYLH…AGLDISTLLP (176 aa). Residues Asp671 and Asp736 each contribute to the Mg(2+) site. Disordered regions lie at residues 956–1087, 1092–1111, and 1130–1186; these read SKAV…ETEK, RSPSIDASPPENNSSHNIVP, and DLPL…EDNE. Positions 960–969 are enriched in low complexity; sequence SPTDSTPPST. Positions 1005-1015 are enriched in polar residues; the sequence is STPQISNIEST. Over residues 1038–1053 the composition is skewed to basic and acidic residues; the sequence is ESSHASKSKDFRHSDS. Polar residues-rich tracts occupy residues 1054–1082 and 1101–1111; these read YSENETNHTNVPISSTGGTNNKTVPQISD and PENNSSHNIVP. Residues 1178–1212 carry the Bipartite nuclear localization signal motif; it reads KKRSLEDNETEIKVSRDTWNTKNMRSLEPPRSKKR. Positions 1338–1476 constitute a Reverse transcriptase Ty1/copia-type domain; it reads NNYYITQLDI…DILGLEIKYQ (139 aa). Asp1346, Asp1427, Asp1428, Asp1610, Glu1652, and Asp1685 together coordinate Mg(2+). An RNase H Ty1/copia-type domain is found at 1610-1752; it reads DASYGNQPYY…IKTFKLLTNK (143 aa).

In terms of assembly, the capsid protein forms a homotrimer, from which the VLPs are assembled. The protease is a homodimer, whose active site consists of two apposed aspartic acid residues. Initially, virus-like particles (VLPs) are composed of the structural unprocessed proteins Gag and Gag-Pol, and also contain the host initiator methionine tRNA (tRNA(i)-Met) which serves as a primer for minus-strand DNA synthesis, and a dimer of genomic Ty RNA. Processing of the polyproteins occurs within the particle and proceeds by an ordered pathway, called maturation. First, the protease (PR) is released by autocatalytic cleavage of the Gag-Pol polyprotein yielding capsid protein p45 and a Pol-p154 precursor protein. This cleavage is a prerequisite for subsequent processing of Pol-p154 at the remaining sites to release the mature structural and catalytic proteins. Maturation takes place prior to the RT reaction and is required to produce transposition-competent VLPs.

Its subcellular location is the cytoplasm. It localises to the nucleus. It carries out the reaction DNA(n) + a 2'-deoxyribonucleoside 5'-triphosphate = DNA(n+1) + diphosphate. The catalysed reaction is Endonucleolytic cleavage to 5'-phosphomonoester.. Its function is as follows. Capsid protein (CA) is the structural component of the virus-like particle (VLP), forming the shell that encapsulates the retrotransposons dimeric RNA genome. The particles are assembled from trimer-clustered units and there are holes in the capsid shells that allow for the diffusion of macromolecules. CA also has nucleocapsid-like chaperone activity, promoting primer tRNA(i)-Met annealing to the multipartite primer-binding site (PBS), dimerization of Ty1 RNA and initiation of reverse transcription. Functionally, the aspartyl protease (PR) mediates the proteolytic cleavages of the Gag and Gag-Pol polyproteins after assembly of the VLP. In terms of biological role, reverse transcriptase/ribonuclease H (RT) is a multifunctional enzyme that catalyzes the conversion of the retro-elements RNA genome into dsDNA within the VLP. The enzyme displays a DNA polymerase activity that can copy either DNA or RNA templates, and a ribonuclease H (RNase H) activity that cleaves the RNA strand of RNA-DNA heteroduplexes during plus-strand synthesis and hydrolyzes RNA primers. The conversion leads to a linear dsDNA copy of the retrotransposon that includes long terminal repeats (LTRs) at both ends. Integrase (IN) targets the VLP to the nucleus, where a subparticle preintegration complex (PIC) containing at least integrase and the newly synthesized dsDNA copy of the retrotransposon must transit the nuclear membrane. Once in the nucleus, integrase performs the integration of the dsDNA into the host genome. This is Transposon Ty1-JR1 Gag-Pol polyprotein (TY1B-JR1) from Saccharomyces cerevisiae (strain ATCC 204508 / S288c) (Baker's yeast).